Consider the following 121-residue polypeptide: Fluoride-specific ion channel FluC 2 (121 aa).

Transmembrane regions (helical) follow at residues 3–23, 27–47, 64–84, and 92–112; these read YLFV…LSTL, SGLP…MGYL, GVTT…FELV, and IALL…FCWF. Positions 71 and 74 each coordinate Na(+).

This sequence belongs to the fluoride channel Fluc/FEX (TC 1.A.43) family.

The protein localises to the cell membrane. It catalyses the reaction fluoride(in) = fluoride(out). With respect to regulation, na(+) is not transported, but it plays an essential structural role and its presence is essential for fluoride channel function. Functionally, fluoride-specific ion channel. Important for reducing fluoride concentration in the cell, thus reducing its toxicity. The chain is Fluoride-specific ion channel FluC 2 from Staphylococcus haemolyticus (strain JCSC1435).